The primary structure comprises 298 residues: Short-chain dehydrogenase reductase 4 (298 aa).

Residue Ile-50–Val-74 coordinates NAD(+). Residue Ser-182 participates in substrate binding. Residue Tyr-195 is the Proton acceptor of the active site.

This sequence belongs to the short-chain dehydrogenases/reductases (SDR) family.

This Arabidopsis thaliana (Mouse-ear cress) protein is Short-chain dehydrogenase reductase 4 (SDR4).